Reading from the N-terminus, the 308-residue chain is Porphobilinogen deaminase (308 aa).

Cys-243 is subject to S-(dipyrrolylmethanemethyl)cysteine.

It belongs to the HMBS family. Monomer. Requires dipyrromethane as cofactor.

It carries out the reaction 4 porphobilinogen + H2O = hydroxymethylbilane + 4 NH4(+). It participates in porphyrin-containing compound metabolism; protoporphyrin-IX biosynthesis; coproporphyrinogen-III from 5-aminolevulinate: step 2/4. In terms of biological role, tetrapolymerization of the monopyrrole PBG into the hydroxymethylbilane pre-uroporphyrinogen in several discrete steps. The polypeptide is Porphobilinogen deaminase (Nitrosomonas europaea (strain ATCC 19718 / CIP 103999 / KCTC 2705 / NBRC 14298)).